Consider the following 334-residue polypeptide: D-aspartate oxidase 1 (334 aa).

Residues Asp35, Arg36, Ser43, Gly307, and Thr312 each coordinate FAD. The short motif at 332–334 (SKL) is the Microbody targeting signal element.

This sequence belongs to the DAMOX/DASOX family. The cofactor is FAD. As to expression, expressed in the intestinal cells, hypodermis and in unidentified cells in the head in adult hermaphrodites.

It is found in the peroxisome matrix. The enzyme catalyses D-aspartate + O2 + H2O = oxaloacetate + H2O2 + NH4(+). It catalyses the reaction D-glutamate + O2 + H2O = H2O2 + 2-oxoglutarate + NH4(+). Not inhibited by potassium bromide or thiolactomycin. Its function is as follows. Selectively catalyzes the oxidative deamination of acidic amino acids. May play a role in the egg-laying events and early development of the worm, in addition to quality control of the germ cells. The polypeptide is D-aspartate oxidase 1 (ddo-1) (Caenorhabditis elegans).